The following is a 386-amino-acid chain: MQSAHRLNNLPPYLFADLDKMVQKEQAKGKEIIKLGIGDPGMKPPEGIIKAATQEMYKGENHGYPAYDGIDKLKHAIKEYYQSRFGVELNPDREILTLIGSKEGIANISQAILNPGDINFIPDPSYPVYKNGTILAGGTPHSMPLKQDNGFIPELESIPQSRLSKGKIVFMNYPNNPTSAVASKDFYSHAVKFCQKNKLLLCNDAAYSEIAFDDYQPQSLLSVPGAKEVAIEFNSLSKTFNMTGWRVGFVVGNEKAISALAKYKTNVDSGVFTPLQLAATHALENRHEYIPDILKAYKERRDLVIEFLEEAGFHVYHPKATFYVWAQVPGNQDSFNFTKSLLTKTGVVVTPGIGFGKHGEGYFRIALTVTKDRLKTAMEKICEYFS.

Residues tyrosine 13 and glycine 38 each coordinate substrate. Pyridoxal 5'-phosphate is bound by residues tyrosine 67, 101 to 102 (SK), tyrosine 126, asparagine 176, tyrosine 207, and 235 to 237 (SLS). Residues lysine 102, tyrosine 126, and asparagine 176 each contribute to the substrate site. At lysine 238 the chain carries N6-(pyridoxal phosphate)lysine. Arginine 246 contributes to the pyridoxal 5'-phosphate binding site. Arginine 364 serves as a coordination point for substrate.

It belongs to the class-I pyridoxal-phosphate-dependent aminotransferase family. LL-diaminopimelate aminotransferase subfamily. As to quaternary structure, homodimer. Requires pyridoxal 5'-phosphate as cofactor.

The enzyme catalyses (2S,6S)-2,6-diaminopimelate + 2-oxoglutarate = (S)-2,3,4,5-tetrahydrodipicolinate + L-glutamate + H2O + H(+). It participates in amino-acid biosynthesis; L-lysine biosynthesis via DAP pathway; LL-2,6-diaminopimelate from (S)-tetrahydrodipicolinate (aminotransferase route): step 1/1. Its function is as follows. Involved in the synthesis of meso-diaminopimelate (m-DAP or DL-DAP), required for both lysine and peptidoglycan biosynthesis. Catalyzes the direct conversion of tetrahydrodipicolinate to LL-diaminopimelate. The sequence is that of LL-diaminopimelate aminotransferase from Natranaerobius thermophilus (strain ATCC BAA-1301 / DSM 18059 / JW/NM-WN-LF).